The sequence spans 141 residues: Large ribosomal subunit protein uL14 (141 aa).

The protein belongs to the universal ribosomal protein uL14 family. Part of the 50S ribosomal subunit. Forms a cluster with proteins L3 and L24e, part of which may contact the 16S rRNA in 2 intersubunit bridges.

In terms of biological role, binds to 23S rRNA. Forms part of two intersubunit bridges in the 70S ribosome. The sequence is that of Large ribosomal subunit protein uL14 from Pyrococcus abyssi (strain GE5 / Orsay).